A 199-amino-acid chain; its full sequence is MKLVLASASPRRREILKNITEDFIVVASDFDESLIEISRDIQSYVMVLAESKAKSTLCRIESEDFYKDEDEVFIIGCDTVVSIDGKILGKPKDEKEALDMLSELSGRTHEVYSGLAVLDAKKNKIIKDFQCTEVKFSEISYETILKYIACGEYADKAGAYGIQGKASVFVEEIKGSYYNVVGLPINKLYKILLGMGVNL.

The active-site Proton acceptor is D78.

It belongs to the Maf family. YhdE subfamily. Requires a divalent metal cation as cofactor.

It is found in the cytoplasm. The catalysed reaction is dTTP + H2O = dTMP + diphosphate + H(+). It catalyses the reaction UTP + H2O = UMP + diphosphate + H(+). In terms of biological role, nucleoside triphosphate pyrophosphatase that hydrolyzes dTTP and UTP. May have a dual role in cell division arrest and in preventing the incorporation of modified nucleotides into cellular nucleic acids. The polypeptide is dTTP/UTP pyrophosphatase (Clostridium acetobutylicum (strain ATCC 824 / DSM 792 / JCM 1419 / IAM 19013 / LMG 5710 / NBRC 13948 / NRRL B-527 / VKM B-1787 / 2291 / W)).